The sequence spans 376 residues: MEGEEKPAQEADVEPVVTAGTSEAVPRVLAGDPQNISDVDAFNLLLEMKLKRRRERPNLPRTVTQLVAEDGSRVYVVGTAHFSDDSKRDVVKTIREVQPDVVVVELCQYRVSMLKMDERTLLREAKEVSLEKLQQAVRQNGLMSGLMQMLLLKVSAHITEQLGMAPGGEFREAFKEASKVPFCKFHLGDRPIPVTFKRAIAALSFWQKVKLAWGLCFLSDPISKDDVERCKQKDLLEQMMAEMIGEFPDLHRTIVSERDVYLTYMLRQAARRLELPRASDAEPRKCVPSVVVGVVGMGHVPGIEKNWSTDLNIQEIMTVPPPSISGRVSRVAVKAAFFGLLGYSLYWMGRRTLNLVLSLPAAQFCLQRVSEARPGR.

N-acetylmethionine is present on methionine 1. Threonine 64 carries the post-translational modification Phosphothreonine.

This is TraB domain-containing protein (Trabd) from Mus musculus (Mouse).